Reading from the N-terminus, the 137-residue chain is Photosystem II reaction center W protein, chloroplastic (137 aa).

Residues 1–64 (MATITASSSA…ETTTTTNKSM (64 aa)) constitute a chloroplast transit peptide. Residues 65–83 (GASLLAAAAAATISNPAMA) constitute a thylakoid transit peptide. Topologically, residues 84-103 (LVDERMSTEGTGLPFGLSNN) are lumenal, thylakoid. The helical transmembrane segment at 104–123 (LLGWILFGVFGLIWALYFVY) threads the bilayer. The Stromal segment spans residues 124–137 (ASGLEEDEESGLSL).

As to quaternary structure, part of the photosystem II complex. PSII is composed of 1 copy each of membrane proteins PsbA, PsbB, PsbC, PsbD, numerous small proteins, at least 3 peripheral proteins of the oxygen-evolving complex and a large number of cofactors. It forms dimeric complexes.

Its subcellular location is the plastid. The protein resides in the chloroplast thylakoid membrane. Its function is as follows. Stabilizes dimeric photosystem II (PSII). In its absence no dimeric PSII accumulates and there is a reduction of monomeric PSII. This is Photosystem II reaction center W protein, chloroplastic from Spinacia oleracea (Spinach).